A 197-amino-acid polypeptide reads, in one-letter code: Protein lin-7 homolog C (197 aa).

N-acetylalanine is present on Ala2. A Kinase interacting site motif is present at residues 2-13; the sequence is AALGEPVRLERD. The 56-residue stretch at 10–65 folds into the L27 domain; the sequence is LERDICRAIELLEKLQRSGEVPPQKLQALQRVLQSEFCNAVREVYEHVYETVDISS. The PDZ domain occupies 93-175; sequence VVELPKTEEG…KVKLVVRYTP (83 aa).

This sequence belongs to the lin-7 family. As to quaternary structure, forms a complex with CASK and APBA1 or CASKIN1. Component of the brain-specific heterotrimeric complex (LIN-10-LIN-2-LIN-7 complex) composed of at least APBA1, CASK, and LIN7, which associates with the motor protein KIF17 to transport vesicles along microtubules. Can also interact with other modular proteins containing protein-protein interaction domains like PALS1, PALS2, MPP7, DLG1, DLG2 and DLG3 through its L27 domain. Interacts with DLG4 and GRIN2B as well as CDH1 and CTNNB1, the channels KCNJ12/Kir2.2, KCNJ4/Kir2.3 and probably KCNJ2/Kir2.1 and SLC6A12/BGT-1 via its PDZ domain. The association of LIN7A with cadherin and beta-catenin is calcium-dependent, occurs at synaptic junctions and requires the actin cytoskeleton. Interacts with EGFR, ERBB2, ERBB3 and ERBB4 with both PDZ and KID domains. Associates with KIF17 via APBA1. Interacts with HTR4. Forms a tripartite complex composed of DLG1, MPP7 and LIN7 (LIN7A or LIN7C). Interacts with MAPK12.

The protein localises to the cell membrane. Its subcellular location is the basolateral cell membrane. It localises to the cell junction. The protein resides in the postsynaptic density membrane. It is found in the tight junction. The protein localises to the synapse. Its subcellular location is the synaptosome. Plays a role in establishing and maintaining the asymmetric distribution of channels and receptors at the plasma membrane of polarized cells. Forms membrane-associated multiprotein complexes that may regulate delivery and recycling of proteins to the correct membrane domains. The tripartite complex composed of LIN7 (LIN7A, LIN7B or LIN7C), CASK and APBA1 associates with the motor protein KIF17 to transport vesicles containing N-methyl-D-aspartate (NMDA) receptor subunit NR2B along microtubules. This complex may have the potential to couple synaptic vesicle exocytosis to cell adhesion in brain. Ensures the proper localization of GRIN2B (subunit 2B of the NMDA receptor) to neuronal postsynaptic density and may function in localizing synaptic vesicles at synapses where it is recruited by beta-catenin and cadherin. Required to localize Kir2 channels, GABA transporter (SLC6A12) and EGFR/ERBB1, ERBB2, ERBB3 and ERBB4 to the basolateral membrane of epithelial cells. This Bos taurus (Bovine) protein is Protein lin-7 homolog C (LIN7C).